Reading from the N-terminus, the 461-residue chain is Serine incorporator 5 (461 aa).

The Extracellular segment spans residues 1–36 (MSARCCAGQLACCCGSAGCSLCCGCCPKFRQSRTTR). The helical transmembrane segment at 37 to 57 (FMYLFYFILVIALCCVMMTPS) threads the bilayer. At 58-90 (VMKQVKDHIPFFEEFCKKTQAGGDACENLVGYS) the chain is on the cytoplasmic side. Residues 91–111 (AVYRVCFGMACFFALFCLLTL) traverse the membrane as a helical segment. At 112-125 (KVNNSKSCRAYIHN) the chain is on the extracellular side. Residue Asn114 is glycosylated (N-linked (GlcNAc...) asparagine). Residues 126–146 (GFWFFKLLLLGAMCSGAFFIP) form a helical membrane-spanning segment. At 147–157 (DQETFLKVWRY) the chain is on the cytoplasmic side. A helical transmembrane segment spans residues 158–178 (VGAGGSFLFICIQLLLIVQFA). Residues 179 to 200 (HKWNKNWTAGTVRNKLWYASLS) are Extracellular-facing. N-linked (GlcNAc...) asparagine glycosylation occurs at Asn184. A helical transmembrane segment spans residues 201–221 (LVTLIMYSVAVGGLALMAVFY). Over 222–231 (TQWDDCMDNK) the chain is Cytoplasmic. Residues 232 to 252 (ILLGVHGGLCVLISLVAISPC) form a helical membrane-spanning segment. Residues 253–260 (VQNRQPHS) are Extracellular-facing. Residues 261–281 (GLLQSGLISCYVTYLTFSALT) form a helical membrane-spanning segment. Topologically, residues 282 to 312 (SKPEKKVLDEHGKNVTICAPDFGQDLHRDEN) are cytoplasmic. A helical membrane pass occupies residues 313–333 (MVTWLGTLLLIVCISYSCLTS). The Extracellular portion of the chain corresponds to 334–392 (TTRSSSDALQSRYGAPELEVARCCFCFGPDGEDTEEQQNVKKGPRVIYDEKKGTVYSYS). A helical membrane pass occupies residues 393 to 413 (YFHFVFFLASLYVMMTLTSWF). The Cytoplasmic segment spans residues 414–422 (HYENATIKT). Residues 423–443 (FFSGWSVFWVKMASCWMCVLL) traverse the membrane as a helical segment. Residues 444 to 461 (YLQTLVAPLCCPSRQFSV) lie on the Extracellular side of the membrane.

It belongs to the TDE1 family.

The protein localises to the cell membrane. The catalysed reaction is a 1,2-diacyl-sn-glycero-3-phospho-L-serine(in) = a 1,2-diacyl-sn-glycero-3-phospho-L-serine(out). The enzyme catalyses a 1,2-diacyl-sn-glycero-3-phosphocholine(in) = a 1,2-diacyl-sn-glycero-3-phosphocholine(out). It carries out the reaction a 1,2-diacyl-sn-glycero-3-phosphoethanolamine(in) = a 1,2-diacyl-sn-glycero-3-phosphoethanolamine(out). In terms of biological role, restriction factor required to restrict infectivity of gammaretroviruses: acts by inhibiting an early step of viral infection. Impairs the penetration of the viral particle into the cytoplasm. Non-ATP-dependent, non-specific lipid transporter for phosphatidylserine, phosphatidylcholine, and phosphatidylethanolamine. Functions as a scramblase that flips lipids in both directions across the membrane. Phospholipid scrambling results in gammaretroviral surface exposure of phosphatidylserine and loss of membrane asymmetry, which leads to loss of infectivity. Enhances the incorporation of serine into phosphatidylserine and sphingolipids. May play a role in providing serine molecules for the formation of myelin glycosphingolipids in oligodendrocytes. This is Serine incorporator 5 (Serinc5) from Mus musculus (Mouse).